The primary structure comprises 288 residues: Polyamine aminopropyltransferase (288 aa).

One can recognise a PABS domain in the interval 9–238 (ETLHDQFGQY…GIMTFAWATD (230 aa)). An S-methyl-5'-thioadenosine-binding site is contributed by Gln-33. Spermidine is bound by residues His-64 and Asp-88. S-methyl-5'-thioadenosine-binding positions include Glu-108 and 140-141 (DG). Asp-158 functions as the Proton acceptor in the catalytic mechanism. 158–161 (DCTD) contributes to the spermidine binding site. Pro-165 is an S-methyl-5'-thioadenosine binding site.

Belongs to the spermidine/spermine synthase family. Homodimer or homotetramer.

The protein resides in the cytoplasm. The enzyme catalyses S-adenosyl 3-(methylsulfanyl)propylamine + putrescine = S-methyl-5'-thioadenosine + spermidine + H(+). The protein operates within amine and polyamine biosynthesis; spermidine biosynthesis; spermidine from putrescine: step 1/1. Functionally, catalyzes the irreversible transfer of a propylamine group from the amino donor S-adenosylmethioninamine (decarboxy-AdoMet) to putrescine (1,4-diaminobutane) to yield spermidine. This chain is Polyamine aminopropyltransferase, found in Shigella boydii serotype 4 (strain Sb227).